The sequence spans 328 residues: Ketol-acid reductoisomerase (NADP(+)) (328 aa).

Positions alanine 2 to threonine 182 constitute a KARI N-terminal Rossmann domain. Residues tyrosine 25–glutamine 28, arginine 48, serine 53, and aspartate 83–glutamine 86 each bind NADP(+). Histidine 108 is a catalytic residue. NADP(+) is bound at residue glycine 134. The region spanning threonine 183 to proline 328 is the KARI C-terminal knotted domain. Mg(2+)-binding residues include aspartate 191, glutamate 195, glutamate 227, and glutamate 231. Serine 252 is a binding site for substrate.

Belongs to the ketol-acid reductoisomerase family. The cofactor is Mg(2+).

The catalysed reaction is (2R)-2,3-dihydroxy-3-methylbutanoate + NADP(+) = (2S)-2-acetolactate + NADPH + H(+). The enzyme catalyses (2R,3R)-2,3-dihydroxy-3-methylpentanoate + NADP(+) = (S)-2-ethyl-2-hydroxy-3-oxobutanoate + NADPH + H(+). It functions in the pathway amino-acid biosynthesis; L-isoleucine biosynthesis; L-isoleucine from 2-oxobutanoate: step 2/4. It participates in amino-acid biosynthesis; L-valine biosynthesis; L-valine from pyruvate: step 2/4. In terms of biological role, involved in the biosynthesis of branched-chain amino acids (BCAA). Catalyzes an alkyl-migration followed by a ketol-acid reduction of (S)-2-acetolactate (S2AL) to yield (R)-2,3-dihydroxy-isovalerate. In the isomerase reaction, S2AL is rearranged via a Mg-dependent methyl migration to produce 3-hydroxy-3-methyl-2-ketobutyrate (HMKB). In the reductase reaction, this 2-ketoacid undergoes a metal-dependent reduction by NADPH to yield (R)-2,3-dihydroxy-isovalerate. The polypeptide is Ketol-acid reductoisomerase (NADP(+)) (Pyrobaculum aerophilum (strain ATCC 51768 / DSM 7523 / JCM 9630 / CIP 104966 / NBRC 100827 / IM2)).